A 170-amino-acid polypeptide reads, in one-letter code: NADH-quinone oxidoreductase subunit B (170 aa).

Cys46, Cys47, Cys111, and Cys141 together coordinate [4Fe-4S] cluster.

This sequence belongs to the complex I 20 kDa subunit family. In terms of assembly, NDH-1 is composed of 14 different subunits. Subunits NuoB, C, D, E, F, and G constitute the peripheral sector of the complex. [4Fe-4S] cluster serves as cofactor.

It is found in the cell membrane. It carries out the reaction a quinone + NADH + 5 H(+)(in) = a quinol + NAD(+) + 4 H(+)(out). Functionally, NDH-1 shuttles electrons from NADH, via FMN and iron-sulfur (Fe-S) centers, to quinones in the respiratory chain. The immediate electron acceptor for the enzyme in this species is believed to be a menaquinone. Couples the redox reaction to proton translocation (for every two electrons transferred, four hydrogen ions are translocated across the cytoplasmic membrane), and thus conserves the redox energy in a proton gradient. The polypeptide is NADH-quinone oxidoreductase subunit B (Geobacillus sp. (strain WCH70)).